Reading from the N-terminus, the 617-residue chain is MGKIIGIDLGTTNSCVSVMEGGNPVVIPNAEGSRTTPSVVAFKEDGERLVGQVAKRQAITNPDKTIISIKRHMGTDYRVNVDGKDYSPEEISAMILQKLKADAEAYLGETVTEAVITVPAYFNDSERQATKNAGKIAGLDVKRIINEPTAASLAYGLDKMDKSHKIFVYDLGGGTFDVSILELGDGVFEVKATNGNTKLGGDDFDQKIMDYIAETFKAENGIDLRNDKMALQRLKEAAEKAKIELSSSTKTNINLPFITADATGPKHIDMDLTRAKFEELSADLVQATIEPMKKALADAELTINDIDKVVLVGGSTRIPAVQEAVQKFTGKEPSKGVNPDEVVAMGAAVQAGVLTGEVKDILLLDVTPLTLGIETMGGVATPLIERNTTIPTRKSQIFSTAADNQTSVDIHIVQGERKMAGDNKTLGRFQLSGIAPAPRGIPQIEVSFDIDANGILNVSAKDKGTGKEANITITASTNLSDDEIDKAVKEAEKFAAEDEKRKESVEVKNNADSALYQTEKALKDLGDKVEEADKKNVEEKLEALRQVKDGEDLEAIKKATTELTEEFYKVSSKLYQQAGAEAQQGAQGTQGADMGGNAQGKDDDNVVDADFKVEDDK.

Phosphothreonine; by autocatalysis is present on threonine 175. Positions 578–592 (AGAEAQQGAQGTQGA) are enriched in low complexity. The interval 578–617 (AGAEAQQGAQGTQGADMGGNAQGKDDDNVVDADFKVEDDK) is disordered. Residues 600–617 (GKDDDNVVDADFKVEDDK) are compositionally biased toward basic and acidic residues.

The protein belongs to the heat shock protein 70 family.

Its function is as follows. Acts as a chaperone. The chain is Chaperone protein DnaK from Clostridium novyi (strain NT).